We begin with the raw amino-acid sequence, 225 residues long: Glutathione s-transferase kappa 2 (225 aa).

Glutathione is bound by residues 15-17 (SPY), Asn52, and 200-201 (SD).

This sequence belongs to the GST superfamily. Kappa family. As to expression, expressed in the pharynx, body wall muscles and epidermis. Weaker expression is seen in the intestine.

The protein localises to the mitochondrion. The catalysed reaction is RX + glutathione = an S-substituted glutathione + a halide anion + H(+). Has roles in respiratory and lipid metabolism. The sequence is that of Glutathione s-transferase kappa 2 (gstk-2) from Caenorhabditis elegans.